We begin with the raw amino-acid sequence, 100 residues long: RNA-binding protein YlxQ (100 aa).

This sequence belongs to the eukaryotic ribosomal protein eL8 family.

In terms of biological role, RNA-binding protein that recognizes the K-turn motif present in ribosomal RNA, but also in box C/D and box C'/D' sRNAs. The chain is RNA-binding protein YlxQ from Bacillus subtilis (strain 168).